A 562-amino-acid chain; its full sequence is 2-succinyl-5-enolpyruvyl-6-hydroxy-3-cyclohexene-1-carboxylate synthase (562 aa).

This sequence belongs to the TPP enzyme family. MenD subfamily. In terms of assembly, homodimer. The cofactor is Mg(2+). Mn(2+) is required as a cofactor. It depends on thiamine diphosphate as a cofactor.

The catalysed reaction is isochorismate + 2-oxoglutarate + H(+) = 5-enolpyruvoyl-6-hydroxy-2-succinyl-cyclohex-3-ene-1-carboxylate + CO2. Its pathway is quinol/quinone metabolism; 1,4-dihydroxy-2-naphthoate biosynthesis; 1,4-dihydroxy-2-naphthoate from chorismate: step 2/7. The protein operates within cofactor biosynthesis; phylloquinone biosynthesis. Catalyzes the thiamine diphosphate-dependent decarboxylation of 2-oxoglutarate and the subsequent addition of the resulting succinic semialdehyde-thiamine pyrophosphate anion to isochorismate to yield 2-succinyl-5-enolpyruvyl-6-hydroxy-3-cyclohexene-1-carboxylate (SEPHCHC). The polypeptide is 2-succinyl-5-enolpyruvyl-6-hydroxy-3-cyclohexene-1-carboxylate synthase (Thermosynechococcus vestitus (strain NIES-2133 / IAM M-273 / BP-1)).